A 368-amino-acid chain; its full sequence is p21-activated protein kinase-interacting protein 1-like (368 aa).

WD repeat units lie at residues 45–82, 85–123, 126–165, 207–245, and 248–289; these read AHTA…EHGA, HHDG…CLKT, AHKG…SAFI, AFTK…CVCE, and AHEN…IESP.

It localises to the nucleus. It is found in the nucleolus. Negatively regulates the PAK1 kinase. PAK1 is a member of the PAK kinase family, which has been shown to play a positive role in the regulation of signaling pathways involving MAPK8 and RELA. PAK1 exists as an inactive homodimer, which is activated by binding of small GTPases such as CDC42 to an N-terminal regulatory domain. PAK1IP1 also binds to the N-terminus of PAK1, and inhibits the specific activation of PAK1 by CDC42. May be involved in ribosomal large subunit assembly. In Danio rerio (Zebrafish), this protein is p21-activated protein kinase-interacting protein 1-like (pak1ip1).